Reading from the N-terminus, the 134-residue chain is Transcription antitermination protein NusB (134 aa).

Belongs to the NusB family.

Its function is as follows. Involved in transcription antitermination. Required for transcription of ribosomal RNA (rRNA) genes. Binds specifically to the boxA antiterminator sequence of the ribosomal RNA (rrn) operons. The sequence is that of Transcription antitermination protein NusB from Halothermothrix orenii (strain H 168 / OCM 544 / DSM 9562).